Reading from the N-terminus, the 134-residue chain is (R)-specific enoyl-CoA hydratase (134 aa).

In terms of domain architecture, MaoC-like spans 5–119; sequence SLEVGQKARL…ATLTTRIFTQ (115 aa). Residues 32–37, glycine 55, and phenylalanine 84 contribute to the a (3R)-3-hydroxyacyl-CoA site; that span reads DFNPLH.

Homodimer.

The enzyme catalyses a (3R)-3-hydroxyacyl-CoA = a (2E)-enoyl-CoA + H2O. Its function is as follows. Catalyzes the hydration of trans-2-enoyl-CoA with a chain-length of 4-6 carbon atoms, forming the corresponding (3R)-3-hydroxyacyl-CoA. In Aeromonas caviae (Aeromonas punctata), this protein is (R)-specific enoyl-CoA hydratase (phaJ).